Consider the following 136-residue polypeptide: Small ribosomal subunit protein uS9 (136 aa).

The segment at S97–R136 is disordered. Positions P98–A116 are enriched in basic and acidic residues. Over residues K117–R136 the composition is skewed to basic residues.

Belongs to the universal ribosomal protein uS9 family.

The chain is Small ribosomal subunit protein uS9 from Prochlorococcus marinus (strain MIT 9215).